The sequence spans 974 residues: ATP-dependent RNA helicase glh-2 (974 aa).

The tract at residues 212 to 435 (HESGFGGGKS…SGFGGGNDGG (224 aa)) is disordered. Over residues 215 to 250 (GFGGGKSGGFGGGNSGGSGFGSGGNSNGFGSGGGGQ) the composition is skewed to gly residues. The segment covering 256 to 267 (NNNCFNCQQPGH) has biased composition (polar residues). CCHC-type zinc fingers lie at residues 257–274 (NNCF…DCPE) and 282–299 (RVCY…DCPE). 2 stretches are compositionally biased toward basic and acidic residues: residues 268–282 (RSND…REPR) and 293–307 (NSRD…REGR). The span at 309 to 364 (GFTGGSSGFGGGNGGGTGFDSGLTNGFGSGNNGESGFGSGGFGGNSNGFGSGGGGQ) shows a compositional bias: gly residues. Over residues 370–381 (NNNCFNCQQPGH) the composition is skewed to polar residues. 2 CCHC-type zinc fingers span residues 371–388 (NNCF…DCPE) and 396–413 (RVCY…DCPE). 2 stretches are compositionally biased toward basic and acidic residues: residues 382–396 (RSND…REPR) and 407–421 (NSRD…REGR). Gly residues predominate over residues 426–435 (SGFGGGNDGG). 2 consecutive CCHC-type zinc fingers follow at residues 453 to 470 (MKCF…ECPE) and 473 to 490 (RGCF…ECPN). A Q motif motif is present at residues 552–580 (KTFSEANLGETMKKNVAHAGYTKTTPIQQ). One can recognise a Helicase ATP-binding domain in the interval 583–767 (LPLIHQGHDI…RNHLKEGYIM (185 aa)). Position 596–603 (596–603 (AQTGSGKT)) interacts with ATP. Positions 710 to 713 (DEAD) match the DEAD box motif. One can recognise a Helicase C-terminal domain in the interval 803-950 (DIDSYTTEKN…LVPEWMQGAS (148 aa)).

This sequence belongs to the DEAD box helicase family. DDX4/VASA subfamily. In terms of assembly, interacts (via C-terminus) with kgb-1.

The catalysed reaction is ATP + H2O = ADP + phosphate + H(+). Probable ATP-binding RNA helicase. This is ATP-dependent RNA helicase glh-2 (glh-2) from Caenorhabditis elegans.